The sequence spans 352 residues: Molybdenum import ATP-binding protein ModC (352 aa).

The region spanning 1–229 (MLELNFSQTL…SVMHPWLPKE (229 aa)) is the ABC transporter domain. Residue 31–38 (GVSGAGKT) coordinates ATP. The 64-residue stretch at 289–352 (QTSIRNVLRA…AQVKSVSITA (64 aa)) folds into the Mop domain.

The protein belongs to the ABC transporter superfamily. Molybdate importer (TC 3.A.1.8) family. The complex is composed of two ATP-binding proteins (ModC), two transmembrane proteins (ModB) and a solute-binding protein (ModA).

The protein localises to the cell inner membrane. The enzyme catalyses molybdate(out) + ATP + H2O = molybdate(in) + ADP + phosphate + H(+). In terms of biological role, part of the ABC transporter complex ModABC involved in molybdenum import. Responsible for energy coupling to the transport system. This is Molybdenum import ATP-binding protein ModC from Salmonella typhi.